The chain runs to 200 residues: Inner membrane protein E199L (200 aa).

Residue asparagine 131 is glycosylated (N-linked (GlcNAc...) asparagine; by host). The helical transmembrane segment at isoleucine 150 to isoleucine 170 threads the bilayer.

The protein belongs to the asfivirus E199L family. In terms of assembly, interacts with host PYCR2; this interaction results in autophagy activation. In terms of processing, contains intramolecular disulfide bonds.

Its subcellular location is the virion membrane. It localises to the host membrane. Functionally, essential for viral fusion with host endosomal membrane and core release. Not required for virus morphogenesis and egress. Induces complete autophagy through the interaction with and down-regulation of host PYCR2. This Ornithodoros (relapsing fever ticks) protein is Inner membrane protein E199L.